The following is a 498-amino-acid chain: ATP synthase subunit beta, chloroplastic (498 aa).

Residue Gly-172–Thr-179 coordinates ATP.

It belongs to the ATPase alpha/beta chains family. As to quaternary structure, F-type ATPases have 2 components, CF(1) - the catalytic core - and CF(0) - the membrane proton channel. CF(1) has five subunits: alpha(3), beta(3), gamma(1), delta(1), epsilon(1). CF(0) has four main subunits: a(1), b(1), b'(1) and c(9-12).

It localises to the plastid. The protein localises to the chloroplast thylakoid membrane. The enzyme catalyses ATP + H2O + 4 H(+)(in) = ADP + phosphate + 5 H(+)(out). Produces ATP from ADP in the presence of a proton gradient across the membrane. The catalytic sites are hosted primarily by the beta subunits. In Saccharum hybrid (Sugarcane), this protein is ATP synthase subunit beta, chloroplastic.